Here is a 312-residue protein sequence, read N- to C-terminus: Erlin (312 aa).

Topologically, residues 1 to 3 are cytoplasmic; sequence MLT. The chain crosses the membrane as a helical span at residues 4 to 24; the sequence is ELALGLFALWIAIFSQALHKI. Residues 25 to 312 lie on the Lumenal side of the membrane; the sequence is EEGHVGVYYR…FVMGTTQQTV (288 aa). Asn-104 is a glycosylation site (N-linked (GlcNAc...) asparagine).

This sequence belongs to the band 7/mec-2 family. In terms of assembly, seems to form a multimeric complex. In terms of tissue distribution, expressed in the germline only.

It localises to the endoplasmic reticulum membrane. In Caenorhabditis elegans, this protein is Erlin.